The primary structure comprises 455 residues: Argininosuccinate lyase (455 aa).

It belongs to the lyase 1 family. Argininosuccinate lyase subfamily.

It is found in the cytoplasm. The enzyme catalyses 2-(N(omega)-L-arginino)succinate = fumarate + L-arginine. Its pathway is amino-acid biosynthesis; L-arginine biosynthesis; L-arginine from L-ornithine and carbamoyl phosphate: step 3/3. This Roseiflexus sp. (strain RS-1) protein is Argininosuccinate lyase.